A 395-amino-acid polypeptide reads, in one-letter code: Elongation factor Tu (395 aa).

A tr-type G domain is found at 10–204; that stretch reads KTHANIGTIG…AVDSYIPTPE (195 aa). The interval 19 to 26 is G1; it reads GHVDHGKT. 19–26 is a GTP binding site; that stretch reads GHVDHGKT. Threonine 26 lines the Mg(2+) pocket. Residues 60-64 are G2; that stretch reads GITIN. The G3 stretch occupies residues 81-84; it reads DCPG. GTP contacts are provided by residues 81–85 and 136–139; these read DCPGH and NKCD. The G4 stretch occupies residues 136-139; the sequence is NKCD. A G5 region spans residues 174 to 176; the sequence is SAL.

It belongs to the TRAFAC class translation factor GTPase superfamily. Classic translation factor GTPase family. EF-Tu/EF-1A subfamily. In terms of assembly, monomer.

Its subcellular location is the cytoplasm. The catalysed reaction is GTP + H2O = GDP + phosphate + H(+). GTP hydrolase that promotes the GTP-dependent binding of aminoacyl-tRNA to the A-site of ribosomes during protein biosynthesis. In Lysinibacillus sphaericus (strain C3-41), this protein is Elongation factor Tu.